Reading from the N-terminus, the 311-residue chain is Phospho-N-acetylmuramoyl-pentapeptide-transferase (311 aa).

10 consecutive transmembrane segments (helical) span residues 2–22 (ENNV…IEGF), 48–68 (GTPT…LLNF), 74–94 (SFLI…DDFM), 104–124 (ITAV…VYFI), 144–164 (LGWF…NAVN), 168–188 (GVDG…LIVG), 192–212 (VVYL…WHPA), 214–234 (IFMG…SFAL), 237–257 (LELF…SVII), and 288–308 (KIAF…IIGW).

Belongs to the glycosyltransferase 4 family. MraY subfamily. Mg(2+) serves as cofactor.

The protein resides in the cell inner membrane. It catalyses the reaction UDP-N-acetyl-alpha-D-muramoyl-L-alanyl-gamma-D-glutamyl-meso-2,6-diaminopimeloyl-D-alanyl-D-alanine + di-trans,octa-cis-undecaprenyl phosphate = di-trans,octa-cis-undecaprenyl diphospho-N-acetyl-alpha-D-muramoyl-L-alanyl-D-glutamyl-meso-2,6-diaminopimeloyl-D-alanyl-D-alanine + UMP. The protein operates within cell wall biogenesis; peptidoglycan biosynthesis. Functionally, catalyzes the initial step of the lipid cycle reactions in the biosynthesis of the cell wall peptidoglycan: transfers peptidoglycan precursor phospho-MurNAc-pentapeptide from UDP-MurNAc-pentapeptide onto the lipid carrier undecaprenyl phosphate, yielding undecaprenyl-pyrophosphoryl-MurNAc-pentapeptide, known as lipid I. The sequence is that of Phospho-N-acetylmuramoyl-pentapeptide-transferase from Kosmotoga olearia (strain ATCC BAA-1733 / DSM 21960 / TBF 19.5.1).